A 509-amino-acid chain; its full sequence is Ribonuclease Y (509 aa).

Residues 5–25 (IIILLSVFCGIFFICFIICSS) form a helical membrane-spanning segment. The KH domain occupies 199–259 (TTNIVKLPSD…IRREIATRTL (61 aa)). The region spanning 325–418 (VLAHSIEVAK…VAIADSISAS (94 aa)) is the HD domain.

The protein belongs to the RNase Y family.

The protein resides in the cell membrane. Its function is as follows. Endoribonuclease that initiates mRNA decay. In Mycoplasma capricolum subsp. capricolum (strain California kid / ATCC 27343 / NCTC 10154), this protein is Ribonuclease Y.